We begin with the raw amino-acid sequence, 312 residues long: L-lactate dehydrogenase (312 aa).

Residues V14, D35, and Y66 each contribute to the NAD(+) site. Substrate contacts are provided by residues Q83, R90, and 122-125; that span reads NPVD. NAD(+) contacts are provided by residues 120 to 122 and S145; that span reads ASN. 150-153 contacts substrate; the sequence is DSAR. The Proton acceptor role is filled by H177. Y220 carries the phosphotyrosine modification. T229 contacts substrate.

Belongs to the LDH/MDH superfamily. LDH family. Homotetramer.

The protein resides in the cytoplasm. It carries out the reaction (S)-lactate + NAD(+) = pyruvate + NADH + H(+). The protein operates within fermentation; pyruvate fermentation to lactate; (S)-lactate from pyruvate: step 1/1. In terms of biological role, catalyzes the conversion of lactate to pyruvate. This Mycoplasma pneumoniae (strain ATCC 29342 / M129 / Subtype 1) (Mycoplasmoides pneumoniae) protein is L-lactate dehydrogenase.